The chain runs to 150 residues: Large ribosomal subunit protein bL9 (150 aa).

It belongs to the bacterial ribosomal protein bL9 family.

In terms of biological role, binds to the 23S rRNA. The sequence is that of Large ribosomal subunit protein bL9 from Wigglesworthia glossinidia brevipalpis.